The primary structure comprises 108 residues: Nucleoid-associated protein ACP_0492 (108 aa).

It belongs to the YbaB/EbfC family. Homodimer.

It is found in the cytoplasm. The protein localises to the nucleoid. In terms of biological role, binds to DNA and alters its conformation. May be involved in regulation of gene expression, nucleoid organization and DNA protection. The polypeptide is Nucleoid-associated protein ACP_0492 (Acidobacterium capsulatum (strain ATCC 51196 / DSM 11244 / BCRC 80197 / JCM 7670 / NBRC 15755 / NCIMB 13165 / 161)).